A 1035-amino-acid chain; its full sequence is NACHT, LRR and PYD domains-containing protein 3 (1035 aa).

In terms of domain architecture, Pyrin spans Met-1–Lys-93. At Ser-5 the chain carries Phosphoserine. Cysteines 8 and 108 form a disulfide. Tyr-13 carries the phosphotyrosine modification. Cys-130 carries S-palmitoyl cysteine lipidation. The interval Lys-131–Lys-134 is required for binding to phosphatidylinositol 4-phosphate (PtdIns4P). A phosphotyrosine mark is found at Tyr-136, Tyr-140, and Tyr-143. The 71-residue stretch at Tyr-140–Asp-210 folds into the FISNA domain. A phosphoserine mark is found at Ser-161 and Ser-163. Phosphotyrosine is present on Tyr-168. Position 169 (Thr-169) interacts with ATP. Residues Ser-198 and Ser-201 each carry the phosphoserine modification. One can recognise an NACHT domain in the interval His-220–Leu-536. Gly-226–Thr-233 contacts ATP. Ser-265 and Ser-295 each carry phosphoserine. Lys-324 participates in a covalent cross-link: Glycyl lysine isopeptide (Lys-Gly) (interchain with G-Cter in ubiquitin). Ser-334 bears the Phosphoserine mark. Positions Leu-355–Gln-359 match the KFERQ-like motif 1 motif. A Glycyl lysine isopeptide (Lys-Gly) (interchain with G-Cter in ubiquitin) cross-link involves residue Lys-430. His-522 is an ATP binding site. The short motif at Gln-603 to Glu-607 is the KFERQ-like motif 2 element. Lys-689 participates in a covalent cross-link: Glycyl lysine isopeptide (Lys-Gly) (interchain with G-Cter in ubiquitin). A phosphoserine mark is found at Ser-727 and Ser-734. 5 LRR repeats span residues Ser-741–Cys-761, Asn-770–Leu-791, Lys-798–Cys-818, Asn-827–Ser-848, and Ser-855–Cys-875. A KFERQ-like motif 3 motif is present at residues Gln-797–Glu-801. Ser-805 bears the Phosphoserine mark. S-palmitoyl cysteine attachment occurs at residues Cys-836, Cys-837, and Cys-843. Tyr-860 carries the phosphotyrosine modification. Lys-877 is covalently cross-linked (Glycyl lysine isopeptide (Lys-Gly) (interchain with G-Cter in ubiquitin)). LRR repeat units follow at residues Asn-884–Ser-905, Asn-912–Cys-932, Lys-941–Thr-962, and Ser-969–Glu-990. A Glycyl lysine isopeptide (Lys-Gly) (interchain with G-Cter in ubiquitin) cross-link involves residue Lys-926. Residue Cys-957 is the site of S-palmitoyl cysteine attachment. Residue Lys-972 forms a Glycyl lysine isopeptide (Lys-Gly) (interchain with G-Cter in ubiquitin) linkage. Ser-974 is subject to Phosphoserine. Residues Glu-990–Gln-994 carry the KFERQ-like motif 4 motif. Ser-1034 carries the phosphoserine modification.

It belongs to the NLRP family. In terms of assembly, sensor component of NLRP3 inflammasomes; inflammasomes are supramolecular complexes that assemble in the cytosol in response to pathogens and other damage-associated signals and play critical roles in innate immunity and inflammation. The core of NLRP3 inflammasomes consists of a signal sensor component (NLRP3), an adapter (PYCARD/ASC), which recruits an effector pro-inflammatory caspase (CASP1 and, possibly, CASP4 and CASP5). Homodecamer; inactive NLRP3 forms homodecameric double-ring cages that hide pyrin domains within NACHT-LRR rings to avoid premature activation. Interacts (via pyrin domain) with PYCARD/ASC (via pyrin domain); interaction is direct. Interacts (via LRR repeat domain) with NEK7 (via N-terminus); the interaction is required for the formation of the complex NLRP3:PYCARD, oligomerization of PYCARD/ASC and activation of CASP1. Interacts (via LRR repeat domain) with NR4A1/Nur77 (via N-terminus); the interaction is direct, requires activation of NR4A1 by its ligands NBRE-containing dsDNA and lipopolysaccharide, and stimulates the association of NLRP3 with NEK7 for non-canonical NLRP3 inflammasome activation. Interacts with CARD8; leading to inhibit formation of the NLRP3 inflammasome. Interacts with MEFV; this interaction targets NLRP3 to degradation by autophagy, hence preventing excessive IL1B- and IL18-mediated inflammation. Interacts with EIF2AK2/PKR; this interaction requires EIF2AK2 activity, is accompanied by EIF2AK2 autophosphorylation and promotes inflammasome assembly in response to specific stimuli. Interacts with GBP5 (via DAPIN domain); this interaction promotes inflammasome assembly in response to microbial and soluble, but not crystalline, agents. Interacts with PML (isoform PML-1) (via the leucine-rich repeat (LRR) domain); PML-mediated increase in NLRP3 inflammasome activation does not depend upon this interaction. Interacts (via NACHT domain) with DHX33 (via DEAH box); NLRP3 activation in presence of cytosolic dsRNA is mediated by DHX33. Interacts (via NACHT and LRR domains) with ARRB2; this interaction is direct and inducible by polyunsaturated fatty acids (PUFAs). Interacts (via NACHT domain) with DDX3X under both LPS-primed and inflammasome-activating conditions. Interacts with IRF4 (via the LRR domain); this interaction is direct and is required for optimal IRF4 binding to IL4 promoter and efficient IL4 transactivation during differentiation of Th2 helper T-cells. Interacts with MAVS; promoting localization to mitochondria and activation of the NLRP3 inflammasome. Interacts with MARK4; promoting localization of NLRP3 to the microtubule organizing center (MTOC). Interacts with TRIM50; this interaction also promotes NLRP3 oligomerization and subsequent inflammasome activation. Interacts with IRGM; preventing NLRP3 inflammasome assembly and promoting NLRP3 degradation. Interacts (via KFERQ-like motifs) with HSPA8/HSC70; promoting NLRP3 degradation by the chaperone-mediated autophagy pathway. Interacts (via NACHT and LLR domains) with ABHD8; this interaction is enhanced in the presence of NLRP3 inflammasome inducers, such as ATP, nigericin, silica, or alum. Interaction with ABHD8 leads the recruitment of ZDHHC12, hence facilitating NLRP3 palmitoylation and degradation by the chaperone-mediated autophagy pathway (CMA), therefore attenuating NLRP3 inflammasome activation. In terms of processing, the disulfide bond in the pyrin domain might play a role in reactive oxygen species-mediated activation. Post-translationally, phosphorylation at Ser-198 by MAPK8/JNK1 increases inflammasome activation by promoting deubiquitination by BRCC3 and NLRP3 homooligomerization. Phosphorylation at Ser-805 by CSNK1A1 prevents inflammasome activation by preventing NEK7 recruitment. Phosphorylation at Ser-5 in the pyrin domain inhibits homomultimerization of NLRP3 and activation of the NLRP3 inflammasome: dephosphorylation by protein phosphatase 2A (PP2A) promotes assembly of the NLRP3 inflammasome. Phosphorylation at Ser-295 by PKD/PRKD1 promotes NLRP3 inflammasome assembly. Phosphorylation by ERK1/MAPK3 promotes NLRP3 inflammasome assembly. Phosphorylation by BTK (at Tyr-136, Tyr-140, Tyr-143 and Tyr-168) in the region that mediates binding to phosphatidylinositol phosphate, promotes relocalization of NLRP3 and assembly of the NLRP3 inflammasome. Phosphorylation at Tyr-860 inhibits NLRP3 inflammasome assembly: dephosphorylation by PTPN22 promotes inflammasome activation. Phosphorylated by LATS1 and LATS2 at Ser-265 following palmitoylation by ZDHHC1, promoting its relocalization to the microtubule organizing center (MTOC), where NLRP3 is activated by NEK7, leading to inflammasome assembly and activation. Ubiquitinated; undergoes both 'Lys-48'- and 'Lys-63'-linked polyubiquitination. Ubiquitination does not lead to degradation, but inhibits inflammasome activation. Deubiquitination is catalyzed by BRCC3 and associated with NLRP3 activation and inflammasome assembly. This process can be induced by the activation of Toll-like receptors (by LPS), through a non-transcriptional pathway dependent on the mitochondrial production of reactive oxygen species, and by ATP. Ubiquitinated by TRIM31 via 'Lys-48'-linked ubiquitination, leading to its degradation by the proteasome. Ubiquitinated at Lys-689 by the SCF(FBXL2) complex, leading to its degradation by the proteasome. Ubiquitinated by TRIM35 via 'lys-48' and 'Lys-63'-linked ubiquitination leading to inhibition of NLRP3 inflammasome activation. Undergoes 'Lys-27'-linked polyubiquitination by MARCHF5, leading to NLRP3-NEK7 complex formation and NLRP3 oligomerization. In terms of processing, palmitoylation by ZDHHC12 promotes NLRP3 degradation by the chaperone-mediated autophagy pathway (CMA) and therefore limits NLRP3 inflammasome activation. Interaction with ZDHHC12, and hence NLRP3 palmitoylation, is greatly enhanced by ABHD8. Following palmitoylation, HSPA8/HSC70 recognizes and binds the KFERQ-like motifs on NLRP3 and promotes NLRP3 recruitment to lysosomes, where it is degraded via the chaperone-mediated autophagy pathway in a LAMP2-dependent process. Palmitoylation at Cys-836 and Cys-837 by ZDHHC5 enhances its binding to NEK7 leading to inflammasome assembly and activation. Palmitoylation at Cys-130 and Cys-957 by ZDHHC1 facilitates phosphorylation at Ser-265 by LATS1 and LATS2, promoting its relocalization to the microtubule organizing center (MTOC), where NLRP3 is activated by NEK7, leading to inflammasome assembly and activation. Depalmitoylated by ABHD17A. Post-translationally, degraded via selective autophagy following interaction with IRGM. IRGM promotes NLRP3 recruitment to autophagosome membranes, promoting its SQSTM1/p62-dependent autophagy-dependent degradation. In terms of tissue distribution, highly expressed in oocyte, testis, spleen, thymus and kidney.

It localises to the cytoplasm. It is found in the cytosol. Its subcellular location is the inflammasome. The protein localises to the cytoskeleton. The protein resides in the microtubule organizing center. It localises to the golgi apparatus membrane. It is found in the endoplasmic reticulum. Its subcellular location is the mitochondrion. The protein localises to the secreted. The protein resides in the nucleus. It catalyses the reaction ATP + H2O = ADP + phosphate + H(+). With respect to regulation, under resting conditions, NLRP3 binds ADP and is autoinhibited. Inactive NLRP3 forms homodecameric double-ring cages that hide pyrin domains within NACHT-LRR rings to avoid premature activation. NLRP3 activation stimuli include extracellular ATP, nigericin, reactive oxygen species, crystals of monosodium urate or cholesterol, amyloid-beta fibers, environmental or industrial particles and nanoparticles, such as asbestos, silica, aluminum salts, cytosolic dsRNA, etc. Almost all stimuli trigger intracellular K(+) efflux. These stimuli lead to membrane perturbations that induce activation of NLRP3. Upon activation, NLRP3 is transported to microtubule organizing center (MTOC), where it is unlocked by NEK7, leading to its relocalization to dispersed trans-Golgi network (dTGN) vesicle membranes and recruitment of PYCARD/ASC for the formation of an active inflammasome complex. NEK7-activated NLRP3 forms a disk-shaped inflammasome. NLRP3 and PYCARD/ASC interact via their respective pyrin domains; interaction initiates speck formation (nucleation) which greatly enhances further addition of soluble PYCARD/ASC molecules to the speck in a prion-like polymerization process. Clustered PYCARD/ASC nucleates the formation of CASP1 filaments through the interaction of their respective CARD domains, acting as a platform for CASP1 polymerization and activation. Active CASP1 then processes IL1B and IL18 precursors, leading to the release of mature cytokines in the extracellular milieu and inflammatory response. NLRP3 inflammasome assembly is inhibited by IRGM, which impedes NLRP3 oligomerization. NLRP3 inflammasome is inhibited by cyclic AMP (cAMP), which directly binds NLRP3; inhibition is relieved by calcium-sensing receptor CASR, which inhibits production of cAMP. Specifically inhibited by sulfonylurea MCC950 (also named CP-456,773, CRID3), a potent and specific small-molecule inhibitor of the NLRP3 inflammasome that acts by preventing ATP hydrolysis. Functionally, sensor component of the NLRP3 inflammasome, which mediates inflammasome activation in response to defects in membrane integrity, leading to secretion of inflammatory cytokines IL1B and IL18 and pyroptosis. In response to pathogens and other damage-associated signals that affect the integrity of membranes, initiates the formation of the inflammasome polymeric complex composed of NLRP3, CASP1 and PYCARD/ASC. Recruitment of pro-caspase-1 (proCASP1) to the NLRP3 inflammasome promotes caspase-1 (CASP1) activation, which subsequently cleaves and activates inflammatory cytokines IL1B and IL18 and gasdermin-D (GSDMD), promoting cytokine secretion and pyroptosis. Activation of NLRP3 inflammasome is also required for HMGB1 secretion; stimulating inflammatory responses. Under resting conditions, ADP-bound NLRP3 is autoinhibited. NLRP3 activation stimuli include extracellular ATP, nigericin, reactive oxygen species, crystals of monosodium urate or cholesterol, amyloid-beta fibers, environmental or industrial particles and nanoparticles, such as asbestos, silica, aluminum salts, cytosolic dsRNA, etc. Almost all stimuli trigger intracellular K(+) efflux. These stimuli lead to membrane perturbation and activation of NLRP3. Upon activation, NLRP3 is transported to microtubule organizing center (MTOC), where it is unlocked by NEK7, leading to its relocalization to dispersed trans-Golgi network (dTGN) vesicle membranes and formation of an active inflammasome complex. Associates with dTGN vesicle membranes by binding to phosphatidylinositol 4-phosphate (PtdIns4P). Shows ATPase activity. Independently of inflammasome activation, regulates the differentiation of T helper 2 (Th2) cells and has a role in Th2 cell-dependent asthma and tumor growth. During Th2 differentiation, required for optimal IRF4 binding to IL4 promoter and for IRF4-dependent IL4 transcription. Binds to the consensus DNA sequence 5'-GRRGGNRGAG-3'. May also participate in the transcription of IL5, IL13, GATA3, CCR3, CCR4 and MAF. The protein is NACHT, LRR and PYD domains-containing protein 3 (NLRP3) of Macaca mulatta (Rhesus macaque).